The following is a 164-amino-acid chain: ATP synthase subunit b 1 (164 aa).

The chain crosses the membrane as a helical span at residues 8–28 (AETWVAVGFAILMVVFVYFGV).

The protein belongs to the ATPase B chain family. F-type ATPases have 2 components, F(1) - the catalytic core - and F(0) - the membrane proton channel. F(1) has five subunits: alpha(3), beta(3), gamma(1), delta(1), epsilon(1). F(0) has three main subunits: a(1), b(2) and c(10-14). The alpha and beta chains form an alternating ring which encloses part of the gamma chain. F(1) is attached to F(0) by a central stalk formed by the gamma and epsilon chains, while a peripheral stalk is formed by the delta and b chains.

It is found in the cell inner membrane. In terms of biological role, f(1)F(0) ATP synthase produces ATP from ADP in the presence of a proton or sodium gradient. F-type ATPases consist of two structural domains, F(1) containing the extramembraneous catalytic core and F(0) containing the membrane proton channel, linked together by a central stalk and a peripheral stalk. During catalysis, ATP synthesis in the catalytic domain of F(1) is coupled via a rotary mechanism of the central stalk subunits to proton translocation. Component of the F(0) channel, it forms part of the peripheral stalk, linking F(1) to F(0). This Rhodopseudomonas palustris (strain BisA53) protein is ATP synthase subunit b 1.